The sequence spans 571 residues: Potassium-transporting ATPase potassium-binding subunit (571 aa).

11 helical membrane-spanning segments follow: residues 5–25 (GWTQITLYGAVVLALVKPLGW), 64–84 (LGYAGALLLFHVFGFLVLYAI), 136–156 (GLTHQNFLSAATGIAVAVALI), 178–198 (ILYVLLPICILYTLFLVWQGI), 254–274 (LSNFVQMVSIFAIGAALTNVF), 285–305 (WAILAAMGALFLAGVAVAYWA), 330–350 (FDIAASALFAVVTTAASCGAV), 357–379 (FTALGGMIPLVNMQLGEVIIGGV), 421–441 (MLGILCLPLMMLGFTALATVL), 488–508 (LAVGMLVGRFFVIIPALAIAG), and 527–547 (GALFVGLLVGVILIIGGLTFF).

It belongs to the KdpA family. In terms of assembly, the system is composed of three essential subunits: KdpA, KdpB and KdpC.

It is found in the cell inner membrane. Part of the high-affinity ATP-driven potassium transport (or Kdp) system, which catalyzes the hydrolysis of ATP coupled with the electrogenic transport of potassium into the cytoplasm. This subunit binds the periplasmic potassium ions and delivers the ions to the membrane domain of KdpB through an intramembrane tunnel. The chain is Potassium-transporting ATPase potassium-binding subunit from Methylobacterium nodulans (strain LMG 21967 / CNCM I-2342 / ORS 2060).